The chain runs to 100 residues: Osteocalcin (100 aa).

The N-terminal stretch at 1 to 23 is a signal peptide; it reads MRTPMLLALLALATLCLAGRADA. Positions 24-51 are excised as a propeptide; the sequence is KPGDAESGKGAAFVSKQEGSEVVKRLRR. The Gla domain occupies 52-98; that stretch reads YLDHWLGAPAPYPDPLEPKREVCELNPDCDELADHIGFQEAYRRFYG. Pro-60 carries the 4-hydroxyproline modification. Positions 68, 72, 75, and 81 each coordinate Ca(2+). Glu-68, Glu-72, and Glu-75 each carry 4-carboxyglutamate. A disulfide bridge connects residues Cys-74 and Cys-80.

The protein belongs to the osteocalcin/matrix Gla protein family. Post-translationally, gamma-carboxyglutamate residues are formed by vitamin K dependent carboxylation by GGCX. These residues are essential for the binding of calcium. Decarboxylation promotes the hormone activity.

The protein resides in the secreted. Functionally, the carboxylated form is one of the main organic components of the bone matrix, which constitutes 1-2% of the total bone protein. It acts as a negative regulator of bone formation and is required to limit bone formation without impairing bone resorption or mineralization. The carboxylated form binds strongly to apatite and calcium. The uncarboxylated form acts as a hormone secreted by osteoblasts, which regulates different cellular processes, such as energy metabolism, male fertility and brain development. Regulates of energy metabolism by acting as a hormone favoring pancreatic beta-cell proliferation, insulin secretion and sensitivity and energy expenditure. Uncarboxylated osteocalcin hormone also promotes testosterone production in the testes: acts as a ligand for G protein-coupled receptor GPRC6A at the surface of Leydig cells, initiating a signaling response that promotes the expression of enzymes required for testosterone synthesis in a CREB-dependent manner. Also acts as a regulator of brain development: osteocalcin hormone crosses the blood-brain barrier and acts as a ligand for GPR158 on neurons, initiating a signaling response that prevents neuronal apoptosis in the hippocampus, favors the synthesis of all monoamine neurotransmitters and inhibits that of gamma-aminobutyric acid (GABA). Osteocalcin also crosses the placenta during pregnancy and maternal osteocalcin is required for fetal brain development. This Bos taurus (Bovine) protein is Osteocalcin (BGLAP).